Consider the following 209-residue polypeptide: Probable GTP-binding protein EngB (209 aa).

In terms of domain architecture, EngB-type G spans 24 to 198 (EGMEVAFAGR…HGILDQWLGL (175 aa)). GTP is bound by residues 32–39 (GRSNAGKS), 59–63 (GRTQL), 77–80 (DLPG), 144–147 (TKAD), and 177–179 (FSA). Mg(2+) is bound by residues Ser-39 and Thr-61.

It belongs to the TRAFAC class TrmE-Era-EngA-EngB-Septin-like GTPase superfamily. EngB GTPase family. Mg(2+) is required as a cofactor.

Its function is as follows. Necessary for normal cell division and for the maintenance of normal septation. In Thioalkalivibrio sulfidiphilus (strain HL-EbGR7), this protein is Probable GTP-binding protein EngB.